A 137-amino-acid chain; its full sequence is Large-conductance mechanosensitive channel (137 aa).

2 helical membrane passes run 16 to 36 and 83 to 103; these read VIDL…VDSI and GNFI…FLMI.

This sequence belongs to the MscL family. As to quaternary structure, homopentamer.

It localises to the cell inner membrane. Functionally, channel that opens in response to stretch forces in the membrane lipid bilayer. May participate in the regulation of osmotic pressure changes within the cell. This is Large-conductance mechanosensitive channel from Methylibium petroleiphilum (strain ATCC BAA-1232 / LMG 22953 / PM1).